A 588-amino-acid chain; its full sequence is Endogenous retrovirus group K member 7 Env polyprotein (588 aa).

Residues 355–375 (FIFTLIAVIMGLIAVTATAAV) are fusion peptide. Residues 522 to 542 (IGSTTIINLILILVCLFCLLL) traverse the membrane as a helical segment.

The protein belongs to the beta type-B retroviral envelope protein family. HERV class-II K(HML-2) env subfamily. In terms of assembly, the surface (SU) and transmembrane (TM) proteins form a heterodimer. SU and TM are attached by noncovalent interactions or by a labile interchain disulfide bond. In terms of processing, specific enzymatic cleavages in vivo yield the mature SU and TM proteins. Expressed in lung, placenta, testis and peripheral blood lymphocytes.

The protein resides in the virion. Its subcellular location is the cell membrane. Retroviral envelope proteins mediate receptor recognition and membrane fusion during early infection. Endogenous envelope proteins may have kept, lost or modified their original function during evolution. Its function is as follows. SU mediates receptor recognition. Functionally, TM anchors the envelope heterodimer to the viral membrane through one transmembrane domain. The other hydrophobic domain, called fusion peptide, mediates fusion of the viral membrane with the target cell membrane. This is Endogenous retrovirus group K member 7 Env polyprotein (ERVK-7) from Homo sapiens (Human).